The chain runs to 1048 residues: Calcium-transporting ATPase, endoplasmic reticulum-type (1048 aa).

Over 1-63 (MEEKPFPAWS…WRLVLEQFDD (63 aa)) the chain is Cytoplasmic. The helical transmembrane segment at 64–84 (TLVKILLGAAFISFVLAYVNQ) threads the bilayer. The Lumenal portion of the chain corresponds to 85 to 93 (DETGESGFE). A helical membrane pass occupies residues 94–114 (AYVEPLVILWILVLNAIVGVW). Residues 115-213 (QESNAEKALE…DCELQAKENM (99 aa)) are Cytoplasmic-facing. The helical transmembrane segment at 214–234 (VFAGTTVVNGSCICIVVNTGM) threads the bilayer. At 235–267 (CTEIGKIQRQIHDASMEESDTPLKKKLDEFGNR) the chain is on the lumenal side. The helical transmembrane segment at 268-288 (LTFAIGVVCLVVWAINYKYFL) threads the bilayer. Over 289–312 (SWEVVDDWPSDFRFSFEKCAYYFK) the chain is Cytoplasmic. Residues 313-333 (IAVALAVAAIPEGLPSVITTC) form a helical membrane-spanning segment. The Ca(2+) site is built by valine 319, alanine 320, isoleucine 322, and glutamate 324. Topologically, residues 334-800 (LALGTRKMAQ…ISSNVGEVIS (467 aa)) are lumenal. Aspartate 366 acts as the 4-aspartylphosphate intermediate in catalysis. Mg(2+)-binding residues include aspartate 728 and aspartate 732. Ca(2+) contacts are provided by asparagine 794 and glutamate 797. Residues 801–821 (IFLTAVLGIPECLIPVQLLWV) traverse the membrane as a helical segment. The Ca(2+) site is built by asparagine 822, threonine 825, and aspartate 826. Residues 822-862 (NLVTDGPPATALGFNPADVDIMQKPPRKNTDALINSWVFFR) lie on the Cytoplasmic side of the membrane. A helical membrane pass occupies residues 863 to 883 (YMVIGSYVGIATVGIFIVWYT). Residues 884-944 (QASFLGINIV…CEYFTVGKVK (61 aa)) are Lumenal-facing. Residues 945–965 (AMTLSLSVLVAIEMFNSLNAL) traverse the membrane as a helical segment. Glutamate 957 contributes to the Ca(2+) binding site. The Cytoplasmic segment spans residues 966 to 981 (SEDNSLIKMPPWRNPW). The helical transmembrane segment at 982–1002 (LLVAMSLSFALHSVILYVPFL) threads the bilayer. Residues 1003–1007 (ADIFG) are Lumenal-facing. A helical membrane pass occupies residues 1008 to 1028 (IVPLSLYEWLLVILLSAPVIL). The Cytoplasmic portion of the chain corresponds to 1029–1048 (IDEVLKFVGRRRRRTKLKAA).

Belongs to the cation transport ATPase (P-type) (TC 3.A.3) family. Type IIA subfamily. In terms of tissue distribution, 9-fold higher level in roots compared with leaves.

The protein localises to the endoplasmic reticulum membrane. The catalysed reaction is Ca(2+)(in) + ATP + H2O = Ca(2+)(out) + ADP + phosphate + H(+). This magnesium-dependent enzyme catalyzes the hydrolysis of ATP coupled with the translocation of calcium from the cytosol to an endomembrane compartment. This chain is Calcium-transporting ATPase, endoplasmic reticulum-type, found in Solanum lycopersicum (Tomato).